Reading from the N-terminus, the 29-residue chain is Snaclec multactivase regulatory subunit (29 aa).

The C-type lectin domain occupies 1–29; it reads DCLPGWSVYEGRCYKVFNQKTWKAAEKFC. Cysteines 2 and 13 form a disulfide.

It belongs to the snaclec family. Heterodimer of a metalloproteinase subunit and a regulatory subunit comprising two homologous polypeptides disulfide-linked. Expressed by the venom gland.

Its subcellular location is the secreted. In terms of biological role, multactivase, a carinactivase-like calcium-dependent prothrombin activator, activates prothrombin via recognition of the calcium ion bound conformation of its gamma-carboxyglutamic acid (GLA) domain, and the subsequent conversion of prothrombin to active thrombin is catalyzed by the catalytic subunit. The sequence is that of Snaclec multactivase regulatory subunit from Echis multisquamatus (Central Asian sand viper).